Consider the following 147-residue polypeptide: Hemoglobin subunit beta (147 aa).

A Globin domain is found at 3-147 (EWTDKERTII…VVSALGKQYH (145 aa)). Residues His64 and His93 each contribute to the heme b site.

It belongs to the globin family. Heterotetramer of two alpha chains and two beta chains. Red blood cells.

Its function is as follows. Involved in oxygen transport from gills to the various peripheral tissues. The polypeptide is Hemoglobin subunit beta (Trematomus newnesi (Dusky notothen)).